Consider the following 890-residue polypeptide: MTDVTIKTLAAERQTSVERLVQQFADAGIRKSADDSVSAQEKQTLIDHLNQKNSGPDKLTLQRKTRSTLNIPSTGGKSKSVQIEVRKKRTFVKRDPQEAERLAAEEQAQREAEEQARREAEESAKREAQQKAEREAAEQAKREAAEQAKREAAEKDKVSNQQDDMTKNAQAEKARREQEAAELKRKAEEEARRKLEEEARRVAEEARRMAEENKWTDNAEPTEDSSDYHVTTSQHARQAEDESDREVEGGRGRGRNAKAARPKKGNKHAESKADREEARAAVRGGKGGKRKGSSLQQGFQKPAQAVNRDVVIGETITVGELANKMAVKGSQVIKAMMKLGAMATINQVIDQETAQLVAEEMGHKVILRRENELEEAVMSDRDTGAAAEPRAPVVTIMGHVDHGKTSLLDYIRSTKVASGEAGGITQHIGAYHVETENGMITFLDTPGHAAFTSMRARGAQATDIVVLVVAADDGVMPQTIEAIQHAKAAQVPVVVAVNKIDKPEADPDRVKNELSQYGILPEEWGGESQFVHVSAKAGTGIDELLDAILLQAEVLELKAVRKGMASGAVIESFLDKGRGPVATVLVREGTLHKGDIVLCGFEYGRVRAMRNELGQEVLEAGPSIPVEILGLSGVPAAGDEVTVVRDEKKAREVALYRQGKFREVKLARQQKSKLENMFANMTEGEVHEVNIVLKADVQGSVEAISDSLLKLSTDEVKVKIIGSGVGGITETDATLAAASNAILVGFNVRADASARKVIEAESLDLRYYSVIYNLIDEVKAAMSGMLSPELKQQIIGLAEVRDVFKSPKFGAIAGCMVTEGVVKRHNPIRVLRDNVVIYEGELESLRRFKDDVNEVRNGMECGIGVKNYNDVRTGDVIEVFEIIEIQRTIA.

Residues L45 to P302 form a disordered region. Positions S67–V81 are enriched in polar residues. A compositionally biased stretch (basic and acidic residues) spans V92–D217. Residues G252–N266 are compositionally biased toward basic residues. Basic and acidic residues predominate over residues K267 to A280. Residues P389–K558 enclose the tr-type G domain. The tract at residues G398 to T405 is G1. G398–T405 contacts GTP. A G2 region spans residues G423–H427. Residues D444–G447 are G3. GTP is bound by residues D444 to H448 and N498 to D501. The G4 stretch occupies residues N498–D501. Residues S534–K536 form a G5 region. K808 is modified (N6-acetyllysine).

The protein belongs to the TRAFAC class translation factor GTPase superfamily. Classic translation factor GTPase family. IF-2 subfamily.

It localises to the cytoplasm. In terms of biological role, one of the essential components for the initiation of protein synthesis. Protects formylmethionyl-tRNA from spontaneous hydrolysis and promotes its binding to the 30S ribosomal subunits. Also involved in the hydrolysis of GTP during the formation of the 70S ribosomal complex. The chain is Translation initiation factor IF-2 from Shigella dysenteriae serotype 1 (strain Sd197).